The following is a 394-amino-acid chain: Protein NDRG1 (394 aa).

Position 2 is an N-acetylserine (serine 2). Phosphoserine is present on residues serine 2, serine 319, and serine 326. The segment at 325–394 (RSRTASGSSV…AGPKSMEVSC (70 aa)) is disordered. A compositionally biased stretch (polar residues) spans 327–339 (RTASGSSVTSLEG). Residue threonine 328 is modified to Phosphothreonine. Serine 330 is modified (phosphoserine; by SGK1). Phosphoserine occurs at positions 332 and 333. Threonine 335 is subject to Phosphothreonine. Serine 336 is modified (phosphoserine). 3 consecutive repeat copies span residues 339–348 (GTRSRSHTSE), 349–358 (GPRSRSHTSE), and 359–368 (GSRSRSHTSE). A 3 X 10 AA tandem repeats of G-[PST]-R-S-R-S-H-T-S-E region spans residues 339 to 368 (GTRSRSHTSEGPRSRSHTSEGSRSRSHTSE). The residue at position 340 (threonine 340) is a Phosphothreonine. The residue at position 342 (serine 342) is a Phosphoserine. Residues 345–371 (HTSEGPRSRSHTSEGSRSRSHTSEDAR) are compositionally biased toward basic and acidic residues. Residue threonine 346 is modified to Phosphothreonine; by SGK1. Phosphoserine is present on serine 352. Residue threonine 356 is modified to Phosphothreonine; by SGK1. Phosphoserine is present on residues serine 362 and serine 364. Threonine 366 bears the Phosphothreonine; by SGK1 mark. Over residues 374 to 386 (ITPNSGATGNNAG) the composition is skewed to polar residues. A Phosphothreonine modification is found at threonine 375.

The protein belongs to the NDRG family. Interacts with RAB4A (membrane-bound form); the interaction involves NDRG1 in vesicular recycling of CDH1. Interacts with APOA1, APOA2, PRA1 and RTN1. Post-translationally, under stress conditions, phosphorylated in the C-terminal on many serine and threonine residues. Phosphorylated in vitro by PKA. Phosphorylation enhanced by increased intracellular cAMP levels. Homocysteine induces dephosphorylation. Phosphorylation by SGK1 is cell cycle dependent. In terms of tissue distribution, widely expressed, with highest levels in kidney followed by brain, pancreas, small intestine, colon and spleen (at protein level). Also detected in heart and preputial gland, and in much smaller quantities in other tissues. Not detected in duodenum and prostate. Highly expressed in Schwann cells.

The protein localises to the cytoplasm. It localises to the cytosol. Its subcellular location is the cytoskeleton. It is found in the microtubule organizing center. The protein resides in the centrosome. The protein localises to the nucleus. It localises to the cell membrane. Stress-responsive protein involved in hormone responses, cell growth, and differentiation. Acts as a tumor suppressor in many cell types. Necessary but not sufficient for p53/TP53-mediated caspase activation and apoptosis. Required for vesicular recycling of CDH1 and TF. May also function in lipid trafficking. Protects cells from spindle disruption damage. Functions in p53/TP53-dependent mitotic spindle checkpoint. Regulates microtubule dynamics and maintains euploidy. Has a role in cell trafficking notably of the Schwann cell and is necessary for the maintenance and development of the peripheral nerve myelin sheath. The chain is Protein NDRG1 (Ndrg1) from Mus musculus (Mouse).